Consider the following 212-residue polypeptide: Ras-related protein RABC1 (212 aa).

Gly-2 carries the post-translational modification N-acetylglycine. 20–27 (GDSGVGKS) contributes to the GTP binding site. Residues 41 to 49 (LSPTIGVDF) carry the Effector region motif. GTP-binding positions include 67 to 71 (DTAGQ), 127 to 130 (NKVD), and 157 to 158 (SA). A disordered region spans residues 182–212 (TAEGSSGGKKNIFKQNPAQTTSTSSSYCCSS). Positions 201–212 (TTSTSSSYCCSS) are enriched in low complexity. 2 S-geranylgeranyl cysteine lipidation sites follow: Cys-209 and Cys-210.

The protein belongs to the small GTPase superfamily. Rab family.

Its subcellular location is the cell membrane. Intracellular vesicle trafficking and protein transport. This is Ras-related protein RABC1 (RABC1) from Arabidopsis thaliana (Mouse-ear cress).